We begin with the raw amino-acid sequence, 248 residues long: Probable capsular polysaccharide biosynthesis protein YwqC (248 aa).

2 helical membrane-spanning segments follow: residues 18–38 (ILLI…ISFF) and 174–194 (LLNI…LAFL).

The protein belongs to the CpsC/CapA family. In terms of processing, not phosphorylated in vitro by YwqD.

It is found in the cell membrane. It functions in the pathway capsule biogenesis; capsule polysaccharide biosynthesis. Functionally, required for YwqD kinase activity. May bring YwqD and its substrates into contact. Probably involved in the regulation of capsular polysaccharide biosynthesis. This Bacillus subtilis (strain 168) protein is Probable capsular polysaccharide biosynthesis protein YwqC (ywqC).